The chain runs to 514 residues: Serine--tRNA ligase, cytoplasmic (514 aa).

Met1 carries the N-acetylmethionine modification. Residues 9–61 are interaction with tRNA; it reads RVDKGGDPALIRETQEKRFKDPGLVDQLVKADSEWRRCRFRADNLNKLKNLCS. Ser241 carries the phosphoserine modification. Residues Thr271 and Arg302 each coordinate L-serine. Residues 302-304 and 318-321 contribute to the ATP site; these read RQE and VHQF. At Lys323 the chain carries N6-acetyllysine. Glu325 provides a ligand contact to L-serine. 391–394 is a binding site for ATP; that stretch reads ELVS. Asn427 provides a ligand contact to L-serine. A disordered region spans residues 473–514; that stretch reads PAPIEQEPSKKQKKQHEGSKKKAAARDVTLENRLQNMEVTDA. The span at 479-502 shows a compositional bias: basic and acidic residues; that stretch reads EPSKKQKKQHEGSKKKAAARDVTL. The short motif at 482–494 is the Nuclear localization signal element; it reads KKQKKQHEGSKKK. Over residues 504–514 the composition is skewed to polar residues; that stretch reads NRLQNMEVTDA.

This sequence belongs to the class-II aminoacyl-tRNA synthetase family. Type-1 seryl-tRNA synthetase subfamily. Homodimer. The tRNA molecule may bind across the dimer. Interacts with SIRT2. Interacts with METTL6; interaction is required for the tRNA N(3)-methylcytidine methyltransferase activity of METTL6. As to expression, brain.

It is found in the cytoplasm. The protein resides in the nucleus. It catalyses the reaction tRNA(Ser) + L-serine + ATP = L-seryl-tRNA(Ser) + AMP + diphosphate + H(+). The catalysed reaction is tRNA(Sec) + L-serine + ATP = L-seryl-tRNA(Sec) + AMP + diphosphate + H(+). Its pathway is aminoacyl-tRNA biosynthesis; selenocysteinyl-tRNA(Sec) biosynthesis; L-seryl-tRNA(Sec) from L-serine and tRNA(Sec): step 1/1. Its function is as follows. Catalyzes the attachment of serine to tRNA(Ser) in a two-step reaction: serine is first activated by ATP to form Ser-AMP and then transferred to the acceptor end of tRNA(Ser). Is probably also able to aminoacylate tRNA(Sec) with serine, to form the misacylated tRNA L-seryl-tRNA(Sec), which will be further converted into selenocysteinyl-tRNA(Sec). In the nucleus, binds to the VEGFA core promoter and prevents MYC binding and transcriptional activation by MYC. Recruits SIRT2 to the VEGFA promoter, promoting deacetylation of histone H4 at 'Lys-16' (H4K16). Thereby, inhibits the production of VEGFA and sprouting angiogenesis mediated by VEGFA. The polypeptide is Serine--tRNA ligase, cytoplasmic (Homo sapiens (Human)).